Consider the following 354-residue polypeptide: UDP-3-O-acylglucosamine N-acyltransferase (354 aa).

H250 acts as the Proton acceptor in catalysis.

It belongs to the transferase hexapeptide repeat family. LpxD subfamily. As to quaternary structure, homotrimer.

The enzyme catalyses a UDP-3-O-[(3R)-3-hydroxyacyl]-alpha-D-glucosamine + a (3R)-hydroxyacyl-[ACP] = a UDP-2-N,3-O-bis[(3R)-3-hydroxyacyl]-alpha-D-glucosamine + holo-[ACP] + H(+). It participates in bacterial outer membrane biogenesis; LPS lipid A biosynthesis. Functionally, catalyzes the N-acylation of UDP-3-O-acylglucosamine using 3-hydroxyacyl-ACP as the acyl donor. Is involved in the biosynthesis of lipid A, a phosphorylated glycolipid that anchors the lipopolysaccharide to the outer membrane of the cell. This Methylococcus capsulatus (strain ATCC 33009 / NCIMB 11132 / Bath) protein is UDP-3-O-acylglucosamine N-acyltransferase.